The following is a 340-amino-acid chain: Deubiquitinase SseL (340 aa).

Histidine 222 is a catalytic residue. Residue cysteine 284 is the Nucleophile of the active site.

The protein belongs to the peptidase C79 family.

Its subcellular location is the secreted. The protein localises to the host cytoplasm. Its function is as follows. Effector proteins function to alter host cell physiology and promote bacterial survival in host tissues. This protease targets the host cell ubiquitin pathway by acting as a deubiquitinase in infected host cells. The protein is Deubiquitinase SseL (sseL) of Salmonella arizonae (strain ATCC BAA-731 / CDC346-86 / RSK2980).